The chain runs to 640 residues: Portal protein (640 aa).

This sequence belongs to the herpesviridae portal protein family. As to quaternary structure, homododecamerizes. Interacts with terminase subunits TRM1 and TRM3.

It localises to the virion. Its subcellular location is the host nucleus. In terms of biological role, forms a portal in the viral capsid through which viral DNA is translocated during DNA packaging. Assembles as a dodecamer at a single fivefold axe of the T=16 icosahedric capsid. Binds to the molecular motor that translocates the viral DNA, termed terminase. This chain is Portal protein (U76), found in Human herpesvirus 7 (strain JI) (HHV-7).